We begin with the raw amino-acid sequence, 266 residues long: MRTEMTPLVLSYQEADDILEHLVDNFFNEVPSDDDLYVPSLYELYDLDVESAGEDNNEQAVNEFFPESLILAASEGLFLPEPPVLSPVCEPIGGECMPQLHPEDMDLLCYEMGFPCSDSEDEQDENGMAHVSASAAAAAADREREEFQLDHPELPGHNCKSCEHHRNSTGNTDLMCSLCYLRAYNMFIYSPVSDNEPEPNSTLDGDERPSPPKLGSAVPEGVIKPVPQRVTGRRRCAVESILDLIQEEEREQTVPVDLSVKRPRCN.

The interaction with RB1 in competition with E2F1 stretch occupies residues 39-47; the sequence is PSLYELYDL. The tract at residues 75-145 is interaction with UBE2I; it reads EGLFLPEPPV…AAAAADRERE (71 aa). Residues 98–102 carry the PXLXP motif, interaction with host ZMYND11 motif; sequence PQLHP. An LXCXE motif, interaction with host RB1 and TMEM173/STING motif is present at residues 107–111; the sequence is LLCYE. Residues 159–179 fold into a zinc finger; that stretch reads CKSCEHHRNSTGNTDLMCSLC. The segment at 195–226 is disordered; sequence NEPEPNSTLDGDERPSPPKLGSAVPEGVIKPV. The short motif at 255-259 is the PXDLS motif, CTBP-binding element; that stretch reads PVDLS. The Nuclear localization signal signature appears at 261–265; that stretch reads KRPRC.

This sequence belongs to the adenoviridae E1A protein family. Interacts with host UBE2I; this interaction interferes with polySUMOylation. Interacts with host RB1; this interaction induces the aberrant dissociation of RB1-E2F1 complex thereby disrupting the activity of RB1 and activating E2F1-regulated genes. Interacts with host ATF7; the interaction enhances ATF7-mediated viral transactivation activity which requires the zinc binding domains of both proteins. Isoform early E1A 32 kDa protein and isoform early E1A 26 kDa protein interact (via N-terminus) with CUL1 and E3 ubiquitin ligase RBX1; these interactions inhibit RBX1-CUL1-dependent elongation reaction of ubiquitin chains and attenuate ubiquitination of SCF(FBXW7) target proteins. Interacts (via PXLXP motif) with host ZMYND11/BS69 (via MYND-type zinc finger); this interaction inhibits E1A mediated transactivation. Interacts with host EP300; this interaction stimulates the acetylation of RB1 by recruiting EP300 and RB1 into a multimeric-protein complex. Interacts with host CTBP1 and CTBP2; this interaction seems to potentiate viral replication. Interacts with host DCAF7. Interacts with host DYRK1A. Interacts with host KPNA4; this interaction allows E1A import into the host nucleus. Interacts with host EP400; this interaction stabilizes MYC. Interacts with host TBP protein; this interaction probably disrupts the TBP-TATA complex. Interacts (via LXCXE motif) with host TMEM173/STING; this interaction impairs the ability of TMEM173/STING to sense cytosolic DNA and promote the production of type I interferon (IFN-alpha and IFN-beta). Interacts (via C-terminus) with host ZBED1/hDREF (via C-terminus); the interaction is direct.

The protein localises to the host nucleus. In terms of biological role, plays a role in viral genome replication by driving entry of quiescent cells into the cell cycle. Stimulation of progression from G1 to S phase allows the virus to efficiently use the cellular DNA replicating machinery to achieve viral genome replication. E1A protein has both transforming and trans-activating activities. Induces the disassembly of the E2F1 transcription factor from RB1 by direct competition for the same binding site on RB1, with subsequent transcriptional activation of E2F1-regulated S-phase genes and of the E2 region of the adenoviral genome. Release of E2F1 leads to the ARF-mediated inhibition of MDM2 and causes TP53/p53 to accumulate because it is not targeted for degradation by MDM2-mediated ubiquitination anymore. This increase in TP53, in turn, would arrest the cell proliferation and direct its death but this effect is counteracted by the viral protein E1B-55K. Inactivation of the ability of RB1 to arrest the cell cycle is critical for cellular transformation, uncontrolled cellular growth and proliferation induced by viral infection. Interaction with RBX1 and CUL1 inhibits ubiquitination of the proteins targeted by SCF(FBXW7) ubiquitin ligase complex, and may be linked to unregulated host cell proliferation. The tumorigenesis-restraining activity of E1A may be related to the disruption of the host CtBP-CtIP complex through the CtBP binding motif. Interaction with host TMEM173/STING impairs the ability of TMEM173/STING to sense cytosolic DNA and promote the production of type I interferon (IFN-alpha and IFN-beta). Promotes the sumoylation of host ZBED1/hDREF with SUMO1. The protein is Early E1A protein of Homo sapiens (Human).